The chain runs to 189 residues: GMP synthase [glutamine-hydrolyzing] subunit A (189 aa).

Positions 1–189 (MIVILNNGGQ…CKVCGFKFNE (189 aa)) constitute a Glutamine amidotransferase type-1 domain. Cys76 functions as the Nucleophile in the catalytic mechanism. Active-site residues include His163 and Glu165.

As to quaternary structure, heterodimer composed of a glutamine amidotransferase subunit (A) and a GMP-binding subunit (B).

It catalyses the reaction XMP + L-glutamine + ATP + H2O = GMP + L-glutamate + AMP + diphosphate + 2 H(+). The protein operates within purine metabolism; GMP biosynthesis; GMP from XMP (L-Gln route): step 1/1. Functionally, catalyzes the synthesis of GMP from XMP. The sequence is that of GMP synthase [glutamine-hydrolyzing] subunit A from Methanococcus vannielii (strain ATCC 35089 / DSM 1224 / JCM 13029 / OCM 148 / SB).